The chain runs to 1139 residues: Protein kinase C-like (1139 aa).

An REM-1 1 domain is found at 1 to 67 (MNEDEAIQNI…LRDIQLRKVG (67 aa)). The disordered stretch occupies residues 72 to 132 (GMSLGADDAG…PGPGAASKAR (61 aa)). The REM-1 2 domain maps to 142-219 (KYDTPYLGPR…LKRYEELHVD (78 aa)). In terms of domain architecture, C2 spans 225–343 (AQDDDSINTP…MRRKRIEAEM (119 aa)). The disordered stretch occupies residues 349–404 (VSADRMGSTGAPSQFPMSPTSGSFGGSPQAPGGGQGQAPGPFGDPAPQPQVVTGPI). The span at 358-368 (GAPSQFPMSPT) shows a compositional bias: polar residues. Phorbol-ester/DAG-type zinc fingers lie at residues 454–502 (GHKF…VTKC) and 522–572 (PHRF…PDFC). Disordered regions lie at residues 590–637 (KQRQ…TPSA), 649–668 (QTSPQRPGQPGRAPSDLSAA), and 679–804 (QGRT…TDPG). Residues 594 to 614 (QKTTSLSEKTLRSGATKSPTT) show a composition bias toward polar residues. Positions 615 to 629 (AGHGSSASFSSAGAG) are enriched in low complexity. Pro residues-rich tracts occupy residues 723 to 734 (AQPPAQQRPPQP) and 743 to 760 (AQMPPQQPPPQQPLPPQP). Residues 761 to 793 (GQQYQQQQPAAQKPQPQPPATAQGAAAGPPGSQ) are compositionally biased toward low complexity. The region spanning 814 to 1073 (FNFLAVLGKG…AQEVMSQPFF (260 aa)) is the Protein kinase domain. ATP contacts are provided by residues 820 to 828 (LGKGNFGKV) and lysine 843. The Proton acceptor role is filled by aspartate 939. The 66-residue stretch at 1074–1139 (RNINWDDIYH…RGFSYTADLD (66 aa)) folds into the AGC-kinase C-terminal domain.

It belongs to the protein kinase superfamily. AGC Ser/Thr protein kinase family. PKC subfamily.

The enzyme catalyses L-seryl-[protein] + ATP = O-phospho-L-seryl-[protein] + ADP + H(+). It carries out the reaction L-threonyl-[protein] + ATP = O-phospho-L-threonyl-[protein] + ADP + H(+). Stimulated about twofold by phospholipids or phorbol esters. The chain is Protein kinase C-like (pkc1) from Hypocrea jecorina (Trichoderma reesei).